A 455-amino-acid chain; its full sequence is ATP-dependent protease ATPase subunit HslU (455 aa).

Residues Val-23, 65–70, Asp-266, Glu-333, and Arg-405 each bind ATP; that span reads GVGKTE.

Belongs to the ClpX chaperone family. HslU subfamily. In terms of assembly, a double ring-shaped homohexamer of HslV is capped on each side by a ring-shaped HslU homohexamer. The assembly of the HslU/HslV complex is dependent on binding of ATP.

The protein resides in the cytoplasm. Its function is as follows. ATPase subunit of a proteasome-like degradation complex; this subunit has chaperone activity. The binding of ATP and its subsequent hydrolysis by HslU are essential for unfolding of protein substrates subsequently hydrolyzed by HslV. HslU recognizes the N-terminal part of its protein substrates and unfolds these before they are guided to HslV for hydrolysis. The chain is ATP-dependent protease ATPase subunit HslU from Xanthomonas campestris pv. campestris (strain 8004).